We begin with the raw amino-acid sequence, 813 residues long: MNRRRAYEDDGDFYGERSRKRRRVSENQEMEERLETLILRVGENSSSSLESNLEGLVSVLESDLGNFRSKILRILSECPIKMPEKCTIYSTMVGLMNAKNYNFGGEFVDHMVKTFKESLKQCRWDAARYALRFLSDLVNCHVISTNSLLQLLDNMVDAANEDSVPQVRRDWYVFAVLSTLPWVGRELYEKKESALENLLVRIEVFLNKRTKKHHNSLRVWSVDAPHPQEEYLDCLWAQIRKLRQDNWAEKHIPRPYLAFDSVLCEALQHNLPLIHPPPHQDSFEYPMPWVVYRMFDYTDCPAGPILPGAHSIERFLIEEHLHSIIEAHHWERKDCAANLLNLSYKDKIPLEYCIVEVIFAELFKMPTPRYLDICYGSILIELCKLQPSKMPQVLAQATEILFMRIDSMNTSCFDRFANWFSYHLSNFQFRWSWDDWDSCLLLEPEHPRPKFIEEVLLKCLRLSYHDRFKEMMPETYSKLIPKPPMPTYKYTMEGAASLPGTATAHKLVVAIRQKCTPEDVLNELKDLPNPRETSENDMVESTFNPLKIDVFVQTLLNLGSKSFSHTFAAISKFHLVFKTLAETEEAQICILHNVFELWVNHQQMMVVIIDKLLKTQIVECSAVATWVFSKEMVGEFTKMYLWEILHLTIKKMNQHVTKLSKELSDAKERLDRNAESSSSESEEETAPAGTDAVTPQRRRKKPIGDNADKPTEEQVERMEEKLEAAYVDQKRLFLIIFQRFIMILSEHLVKCDTDGRDYDTDWYRWTVGRLQQVFMMHHEQVKKYSSTLESLLFTSDIDPHILDVFHQFTALRS.

In terms of domain architecture, MIF4G spans 31 to 243 (EERLETLILR…CLWAQIRKLR (213 aa)). Residues 667–716 (KERLDRNAESSSSESEEETAPAGTDAVTPQRRRKKPIGDNADKPTEEQVE) are disordered. Basic and acidic residues predominate over residues 702–716 (PIGDNADKPTEEQVE).

The protein belongs to the NCBP1 family. As to quaternary structure, component of the nuclear cap-binding complex (CBC), a heterodimer composed of Cbp80 and Cbp20 that interacts with m7GpppG-capped RNA.

Its subcellular location is the nucleus. Functionally, component of the cap-binding complex (CBC), which binds cotranscriptionally to the 5'-cap of pre-mRNAs and is involved in various processes such as pre-mRNA splicing and RNA-mediated gene silencing (RNAi). The CBC complex is involved in miRNA-mediated RNA interference and is required for primary microRNAs (miRNAs) processing. Also involved in innate immunity via the short interfering RNAs (siRNAs) processing machinery by restricting the viral RNA production. In the CBC complex, Cbp80 does not bind directly capped RNAs (m7GpppG-capped RNA) but is required to stabilize the movement of the N-terminal loop of Cbp20 and lock the CBC into a high affinity cap-binding state with the cap structure. The polypeptide is Nuclear cap-binding protein subunit 1 (Cbp80) (Aedes aegypti (Yellowfever mosquito)).